The following is a 699-amino-acid chain: eEF1A lysine and N-terminal methyltransferase (699 aa).

Met1 is modified (N-acetylmethionine). At Ser267 the chain carries Phosphoserine. The tract at residues 433 to 459 (VSHKAQKKRKKDRKKQRPADAEDLPAA) is disordered. Basic residues predominate over residues 436–448 (KAQKKRKKDRKKQ).

This sequence belongs to the methyltransferase superfamily. As to quaternary structure, forms a tripartite complex containing GAB1, METTL13 and SPRY2. Within the complex interacts with GAB1 and SPRY2.

The protein resides in the cytoplasm. It localises to the nucleus. It is found in the mitochondrion. It carries out the reaction L-lysyl-[protein] + S-adenosyl-L-methionine = N(6)-methyl-L-lysyl-[protein] + S-adenosyl-L-homocysteine + H(+). The catalysed reaction is N(6)-methyl-L-lysyl-[protein] + S-adenosyl-L-methionine = N(6),N(6)-dimethyl-L-lysyl-[protein] + S-adenosyl-L-homocysteine + H(+). It catalyses the reaction N-terminal glycyl-L-lysyl-L-glutamyl-[protein] + 3 S-adenosyl-L-methionine = N-terminal N,N,N-trimethyl-glycyl-L-lysyl-L-glutamyl-[protein] + 3 S-adenosyl-L-homocysteine + 3 H(+). With respect to regulation, protein N-terminal methyltransferase activity is inhibited by GTP and GDP. In terms of biological role, dual methyltransferase that catalyzes methylation of elongation factor 1-alpha (EEF1A1 and EEF1A2) at two different positions, and is therefore involved in the regulation of mRNA translation. Via its C-terminus, methylates EEF1A1 and EEF1A2 at the N-terminal residue 'Gly-2'. Via its N-terminus dimethylates EEF1A1 and EEF1A2 at residue 'Lys-55'. Has no activity towards core histones H2A, H2B, H3 and H4. The chain is eEF1A lysine and N-terminal methyltransferase from Homo sapiens (Human).